A 211-amino-acid chain; its full sequence is Ribosome maturation factor RimM (211 aa).

Residues 111 to 182 (PDAWYDHQLV…TLVITPPLGL (72 aa)) form the PRC barrel domain. The interval 184 to 211 (EEIPDEQPTPSATSDAEPGSAPEGDDAR) is disordered.

Belongs to the RimM family. Binds ribosomal protein uS19.

It is found in the cytoplasm. Functionally, an accessory protein needed during the final step in the assembly of 30S ribosomal subunit, possibly for assembly of the head region. Essential for efficient processing of 16S rRNA. May be needed both before and after RbfA during the maturation of 16S rRNA. It has affinity for free ribosomal 30S subunits but not for 70S ribosomes. This Clavibacter sepedonicus (Clavibacter michiganensis subsp. sepedonicus) protein is Ribosome maturation factor RimM.